The primary structure comprises 865 residues: MSGRLVVDLQDVDAAGLAEVGGKGAHLGELSRIDGVRVPSGFCVTTHAFRRIMAEAPESGELLDRLSRVDEGDQEAVRSLAARLRQVVGATPLPDEVAAAVTGALARHGERSAYAVRSSATAEDLPTASFAGQQDTYLNVVGTEEILRHVSRCWASLFTERAVTYRGRQGVDHRTVHMGVVVQRMVVPRASGILFTADPVTGDRRTATVDAGFGLGEALVSGLVDPDVLTVRHGEVVARTIAAKRRALHAVQGGGTRETPIEERRQREPVLTDDQAVELVALGRRIEAHFGSPQDIEWCLDDDGFHIVQSRPITTLFPVPERDDDVFRVYLSVGHQQMMTDAMKPLGLSMWRLTALAPMYEAGGRLFVDATARLAVPGSRATLLDVVGRGDPLTRDALETVLENGEFEPTPAETDGGAPPAGDGAEPDEADPSIVTELIERSRRSLAELEREIGTKSGPALFAFLREAFEEHKRVVGDPLNIRAIMAGMEATWWLNDRLEEWLGEKNAADTLTLSAPDNVTSEMGLELLDVADVVRTHPEVVAFLEGVEDDGFLDELPKVPGGAEARDAFEAYLDRYGMRCVGEIDITXPPVRERPSALVPVVLDHVRAFGPGAAARRFEDGRRRALAKEREVLERLRDLPDGERRADAARRMIRQVRAFAGYREYPKYAIVSRSFVYRQALLREADELVRAGVLADREDVHYLTFDEFEEAVRVRRVDERLVRRRKDAFRSYQALTPPRVLTSEGVALSGAYRRDDVPEGALAGLAVSAGTVEGRARVVLDMAEADLEAGDILVTRFTDPSWSPLFVGIAGLVTEVGGLMTHGAVIAREYGLAAVVGVERATRLIRDGQRIRVHGTEGYIELLS.

The segment at 2–314 (SGRLVVDLQD…FHIVQSRPIT (313 aa)) is ATP-binding. ATP contacts are provided by Lys23, Arg117, Gly132, Thr136, Gln183, Glu297, Gln309, and Arg311. The rifampicin-binding stretch occupies residues 327–752 (FRVYLSVGHQ…TSEGVALSGA (426 aa)). The disordered stretch occupies residues 403–430 (ENGEFEPTPAETDGGAPPAGDGAEPDEA). Over residues 409-424 (PTPAETDGGAPPAGDG) the composition is skewed to low complexity. The interval 765-863 (GLAVSAGTVE…VHGTEGYIEL (99 aa)) is swivel phosphohistidine. Catalysis depends on His823, which acts as the Tele-phosphohistidine intermediate.

Belongs to the rifampicin phosphotransferase family.

It carries out the reaction rifampicin + ATP + H2O = 21-phosphorifampicin + AMP + phosphate + 2 H(+). In terms of biological role, catalyzes the phosphorylation of rifampicin, also known as rifampin (RIF), leading to its inactivation. Confers high level resistance to a variety of clinically used rifamycin antibiotics. The sequence is that of Rifampicin phosphotransferase from Streptomyces sp.